Reading from the N-terminus, the 106-residue chain is UPF0145 protein VC_A0951 (106 aa).

It belongs to the UPF0145 family.

The polypeptide is UPF0145 protein VC_A0951 (Vibrio cholerae serotype O1 (strain ATCC 39315 / El Tor Inaba N16961)).